Consider the following 689-residue polypeptide: Glycine--tRNA ligase beta subunit (689 aa).

Belongs to the class-II aminoacyl-tRNA synthetase family. As to quaternary structure, tetramer of two alpha and two beta subunits.

It is found in the cytoplasm. The catalysed reaction is tRNA(Gly) + glycine + ATP = glycyl-tRNA(Gly) + AMP + diphosphate. The protein is Glycine--tRNA ligase beta subunit of Coxiella burnetii (strain Dugway 5J108-111).